The chain runs to 345 residues: MIKVGIVGGTGYTGVELLRILATHPEVELTAITSRKEDGLPVSDMFPSLRGRVDLAFSSPDKAKLTECDVVFFATPHGVAMAQAPELLAAGVKVIDLAADFRLQDTAAFEKWYKMPHSCPELLKEAAYGLVELNRDAIRKARIVGNPGCYPTTMQLGLAPLLKADVIDASHLIADCKSGVSGAGRKAEVSMLFAEAGDNFKAYGVSGHRHSPETVERLQILTGQKVGLLFAPHLVPMIRGMHSTMYARLTKEMDNAALQALFENAYASEPFVDVMPFGSHPETRSTRASNMLRIALHRPNDGDTIVILVVQDNLVKGASGQAVQCMNLMFGLPETTGLLHVPVLP.

The active site involves C149.

This sequence belongs to the NAGSA dehydrogenase family. Type 1 subfamily.

The protein localises to the cytoplasm. The enzyme catalyses N-acetyl-L-glutamate 5-semialdehyde + phosphate + NADP(+) = N-acetyl-L-glutamyl 5-phosphate + NADPH + H(+). The protein operates within amino-acid biosynthesis; L-arginine biosynthesis; N(2)-acetyl-L-ornithine from L-glutamate: step 3/4. Its function is as follows. Catalyzes the NADPH-dependent reduction of N-acetyl-5-glutamyl phosphate to yield N-acetyl-L-glutamate 5-semialdehyde. In Herminiimonas arsenicoxydans, this protein is N-acetyl-gamma-glutamyl-phosphate reductase.